An 833-amino-acid chain; its full sequence is Leucine--tRNA ligase (833 aa).

Residues 41 to 52 (PYPSGAGLHVGH) carry the 'HIGH' region motif. Residues 610 to 614 (KMSKS) carry the 'KMSKS' region motif. Lys613 is a binding site for ATP.

The protein belongs to the class-I aminoacyl-tRNA synthetase family.

It is found in the cytoplasm. It carries out the reaction tRNA(Leu) + L-leucine + ATP = L-leucyl-tRNA(Leu) + AMP + diphosphate. This is Leucine--tRNA ligase from Streptococcus pyogenes serotype M6 (strain ATCC BAA-946 / MGAS10394).